A 309-amino-acid polypeptide reads, in one-letter code: uncharacterized protein (309 aa).

The segment at residues 1–32 is a signal peptide (tat-type signal); sequence MTGTAPVSRRQYLGTAGAIIGTTAGCLTGADA.

Belongs to the bacterial solute-binding protein 1 family. WtpA subfamily. Predicted to be exported by the Tat system. The position of the signal peptide cleavage has not been experimentally proven.

This is an uncharacterized protein from Halobacterium salinarum (strain ATCC 700922 / JCM 11081 / NRC-1) (Halobacterium halobium).